A 569-amino-acid chain; its full sequence is Hemin/hemoglobin-binding protein 2 (569 aa).

An N-terminal signal peptide occupies residues 1–28 (MKKLWKKGLVAFLALTLIFQLIPGFASA). NEAT domains follow at residues 34–173 (KDGG…FKVI), 184–307 (LSDG…ATAA), and 360–484 (LNNH…IKDI). Residues 204–205 (SS), tyrosine 280, and tyrosine 289 each bind heme. The tract at residues 307–357 (ASSYPGSDETPPVVNPGETNPPVTKPDPGTTNPPVTTPPTTPSKPAVVDPK) is disordered. Polar residues predominate over residues 502 to 511 (TGNVASNNNA). Residues 502-537 (TGNVASNNNAGPKLAKPDFDDTNSVQKTASKTEKNA) are disordered. The short motif at 536–540 (NAKTN) is the NXZTN sorting signal element. Threonine 539 bears the Pentaglycyl murein peptidoglycan amidated threonine mark. Positions 540-569 (NDSSSMVWYITLFGASFLYLAYRLKRKRLS) are cleaved as a propeptide — removed by sortase B.

Its subcellular location is the cell surface. The protein localises to the secreted. It localises to the cell wall. Is overexpressed in mecA, clpC and clpP mutants, suggesting the protein level is controlled by MecA, ClpC and ClpP (at protein level). Its function is as follows. Acts as an extracellular and cell wall-bound hemophore; scavenges host heme and hemoglobin from the environment and also serves as a cell wall receptor for both. At low hemin (Hn) and hemoglobin (Hb) concentrations adsorbs Hn/Hb and presumably directs it to membrane transporters. Soluble Hbp2 can probably pass Hn/Hb to cell wall-anchored Hbp2, and both forms can accept Hn/Hb from Hbp1. May be involved in crossing the digestive barrier in infected animals. Binds host hemin. Binds host hemoglobin with affinity in the nanomolar range. The protein is Hemin/hemoglobin-binding protein 2 of Listeria monocytogenes serovar 1/2a (strain ATCC BAA-679 / EGD-e).